The chain runs to 279 residues: Indole-3-glycerol phosphate synthase (279 aa).

Belongs to the TrpC family.

The catalysed reaction is 1-(2-carboxyphenylamino)-1-deoxy-D-ribulose 5-phosphate + H(+) = (1S,2R)-1-C-(indol-3-yl)glycerol 3-phosphate + CO2 + H2O. It participates in amino-acid biosynthesis; L-tryptophan biosynthesis; L-tryptophan from chorismate: step 4/5. In Ectopseudomonas mendocina (strain ymp) (Pseudomonas mendocina), this protein is Indole-3-glycerol phosphate synthase.